Here is a 319-residue protein sequence, read N- to C-terminus: MSAAATMAPVSLRIHAIAYGADDVLLFDLRAPARDGLAPFDAGAHIDLRLPRGITRSYSLLNDPAERHRYVIGVKREPESRGGSAWLHADARVGALIEVDGPSNHFALDESAPHAVFIAGGIGITPLWSMVQRLEHLGTPWTLHYRARSRRGAALLDELAGHGDRVHLSFSDEGAPSLDLAAIVAAAPEGAHFYCCGPVPMLEAFEAACVGLDPARVHLEYFAAKEAPATEGGFVVHLARSGRTIPIAAGCTILDALQAGGVAVPSSCQQGVCGICETAVLAGVPDHRDLVLSDQERAAGRTMMICCSGSKTAELTLDL.

One can recognise an FAD-binding FR-type domain in the interval 7–109; that stretch reads MAPVSLRIHA…DGPSNHFALD (103 aa). 113 to 223 contributes to the NAD(+) binding site; sequence PHAVFIAGGI…PARVHLEYFA (111 aa). The 86-residue stretch at 234 to 319 folds into the 2Fe-2S ferredoxin-type domain; that stretch reads FVVHLARSGR…SKTAELTLDL (86 aa). 4 residues coordinate [2Fe-2S] cluster: Cys268, Cys273, Cys276, and Cys306.

It belongs to the PDR/VanB family. This dioxygenase system consists of two proteins: the alpha subunit (PobA) and a subunit (PobB) that acts as a ferredoxin and a ferredoxin reductase. It depends on FMN as a cofactor.

The protein operates within aromatic compound metabolism; carboxydiphenyl ether degradation. Its function is as follows. Degrades exclusively diarylether compounds having carboxyl groups in the 3- or 4-position. Yields a hemiacetal that spontaneously hydrolyzes to phenol and protocatechuate. The protein is Phenoxybenzoate dioxygenase subunit beta (pobB) of Ectopseudomonas oleovorans (Pseudomonas oleovorans).